The chain runs to 174 residues: Small ribosomal subunit protein uS5 (174 aa).

The region spanning 17 to 80 is the S5 DRBM domain; it reads WQERVVQIRR…ADGKKHLIDV (64 aa).

This sequence belongs to the universal ribosomal protein uS5 family. In terms of assembly, part of the 30S ribosomal subunit. Contacts proteins S4 and S8.

With S4 and S12 plays an important role in translational accuracy. Its function is as follows. Located at the back of the 30S subunit body where it stabilizes the conformation of the head with respect to the body. The protein is Small ribosomal subunit protein uS5 of Thermosynechococcus vestitus (strain NIES-2133 / IAM M-273 / BP-1).